We begin with the raw amino-acid sequence, 222 residues long: Salivary anticoagulant protein P23 (222 aa).

An N-terminal signal peptide occupies residues 1–17 (MLTVSLLTLSLAAYASA). N56, N73, N109, and N114 each carry an N-linked (GlcNAc...) asparagine glycan.

In terms of tissue distribution, salivary gland (at protein level). Adult midgut.

Its subcellular location is the secreted. In terms of biological role, inhibits host coagulation by delaying thrombin generation and reducing endogenous thrombin potential (ETP). This is Salivary anticoagulant protein P23 from Ixodes scapularis (Black-legged tick).